Consider the following 399-residue polypeptide: Serine palmitoyltransferase (399 aa).

Pyridoxal 5'-phosphate contacts are provided by residues 113–114, His213, Thr241, and Ser243; that span reads GF. Lys244 carries the post-translational modification N6-(pyridoxal phosphate)lysine.

It belongs to the class-II pyridoxal-phosphate-dependent aminotransferase family. In terms of assembly, homodimer. Requires pyridoxal 5'-phosphate as cofactor.

Its subcellular location is the cytoplasm. It carries out the reaction L-serine + hexadecanoyl-CoA + H(+) = 3-oxosphinganine + CO2 + CoA. The protein operates within lipid metabolism; sphingolipid metabolism. Functionally, catalyzes the condensation of L-serine with palmitoyl-CoA (hexadecanoyl-CoA) to produce 3-oxosphinganine. The protein is Serine palmitoyltransferase of Sphingobacterium spiritivorum (Flavobacterium spiritivorum).